The primary structure comprises 537 residues: Tyrosine-protein kinase Fyn (537 aa).

Glycine 2 is lipidated: N-myristoyl glycine. Residues cysteine 3 and cysteine 6 are each lipidated (S-palmitoyl cysteine). At threonine 12 the chain carries Phosphothreonine; by PKC. Serine 21 and serine 26 each carry phosphoserine. Residues 82 to 143 (TGVTLFVALY…PSNYVAPVDS (62 aa)) enclose the SH3 domain. The SH2 domain maps to 149 to 246 (WYFGKLGRKD…GLCCRLVVPC (98 aa)). Phosphotyrosine is present on tyrosine 185. Residues 271 to 524 (LQLIKRLGNG…YLQGFLEDYF (254 aa)) enclose the Protein kinase domain. ATP contacts are provided by residues 277–285 (LGNGQFGEV) and lysine 299. The Proton acceptor role is filled by aspartate 390. The residue at position 420 (tyrosine 420) is a Phosphotyrosine; by autocatalysis. Residue tyrosine 531 is modified to Phosphotyrosine; by CSK.

It belongs to the protein kinase superfamily. Tyr protein kinase family. SRC subfamily. In terms of assembly, interacts (via its SH3 domain) with PIK3R1 and PRMT8. Interacts with FYB1, PAG1, and SH2D1A. Interacts with CD79A (tyrosine-phosphorylated form); the interaction increases FYN activity. Interacts (via SH2 domain) with CSF1R (tyrosine phosphorylated). Interacts with TOM1L1 (phosphorylated form). Interacts with KDR (tyrosine phosphorylated). Interacts (via SH3 domain) with KLHL2 (via N-terminus). Interacts with SH2D1A and SLAMF1. Interacts with ITCH; the interaction phosphorylates ITCH and negatively regulates its activity. Interacts with FASLG. Interacts with RUNX3. Interacts with KIT. Interacts with EPHA8; possible downstream effector of EPHA8 in regulation of cell adhesion. Interacts with PTK2/FAK1; this interaction leads to PTK2/FAK1 phosphorylation and activation. Interacts with CAV1; this interaction couples integrins to the Ras-ERK pathway. Interacts with UNC119. Interacts (via SH2 domain) with PTPRH (phosphorylated form). Interacts with PTPRO (phosphorylated form). Interacts with PTPRB (phosphorylated form). Interacts with FYB2. Interacts with DSCAM. Interacts with SKAP1 and FYB1; this interaction promotes the phosphorylation of CLNK. Interacts with NEDD9; in the presence of PTK2. Mn(2+) is required as a cofactor. Post-translationally, autophosphorylated at Tyr-420. Phosphorylation on the C-terminal tail at Tyr-531 by CSK maintains the enzyme in an inactive state. PTPRC/CD45 dephosphorylates Tyr-531 leading to activation. Ultraviolet B (UVB) strongly increase phosphorylation at Thr-12 and kinase activity, and promotes translocation from the cytoplasm to the nucleus. Dephosphorylation at Tyr-420 by PTPN2 negatively regulates T-cell receptor signaling. Phosphorylated at tyrosine residues, which can be enhanced by NTN1. Palmitoylated. Palmitoylation at Cys-3 and Cys-6, probably by ZDHHC21, regulates subcellular location.

The protein resides in the cytoplasm. It is found in the nucleus. The protein localises to the cell membrane. It localises to the perikaryon. The catalysed reaction is L-tyrosyl-[protein] + ATP = O-phospho-L-tyrosyl-[protein] + ADP + H(+). With respect to regulation, inhibited by phosphorylation of Tyr-531 by leukocyte common antigen and activated by dephosphorylation of this site. In terms of biological role, non-receptor tyrosine-protein kinase that plays a role in many biological processes including regulation of cell growth and survival, cell adhesion, integrin-mediated signaling, cytoskeletal remodeling, cell motility, immune response and axon guidance. Inactive FYN is phosphorylated on its C-terminal tail within the catalytic domain. Following activation by PKA, the protein subsequently associates with PTK2/FAK1, allowing PTK2/FAK1 phosphorylation, activation and targeting to focal adhesions. Involved in the regulation of cell adhesion and motility through phosphorylation of CTNNB1 (beta-catenin) and CTNND1 (delta-catenin). Regulates cytoskeletal remodeling by phosphorylating several proteins including the actin regulator WAS and the microtubule-associated proteins MAP2 and MAPT. Promotes cell survival by phosphorylating AGAP2/PIKE-A and preventing its apoptotic cleavage. Participates in signal transduction pathways that regulate the integrity of the glomerular slit diaphragm (an essential part of the glomerular filter of the kidney) by phosphorylating several slit diaphragm components including NPHS1, KIRREL1 and TRPC6. Plays a role in neural processes by phosphorylating DPYSL2, a multifunctional adapter protein within the central nervous system, ARHGAP32, a regulator for Rho family GTPases implicated in various neural functions, and SNCA, a small pre-synaptic protein. Involved in reelin signaling by mediating phosphorylation of DAB1 following reelin (RELN)-binding to its receptor. Participates in the downstream signaling pathways that lead to T-cell differentiation and proliferation following T-cell receptor (TCR) stimulation. Phosphorylates PTK2B/PYK2 in response to T-cell receptor activation. Also participates in negative feedback regulation of TCR signaling through phosphorylation of PAG1, thereby promoting interaction between PAG1 and CSK and recruitment of CSK to lipid rafts. CSK maintains LCK and FYN in an inactive form. Promotes CD28-induced phosphorylation of VAV1. In mast cells, phosphorylates CLNK after activation of immunoglobulin epsilon receptor signaling. Can also promote CD244-mediated NK cell activation. The chain is Tyrosine-protein kinase Fyn from Sus scrofa (Pig).